We begin with the raw amino-acid sequence, 175 residues long: Ribosome maturation factor RimM (175 aa).

The 79-residue stretch at Glu97–Phe175 folds into the PRC barrel domain.

The protein belongs to the RimM family. Binds ribosomal protein uS19.

The protein localises to the cytoplasm. Its function is as follows. An accessory protein needed during the final step in the assembly of 30S ribosomal subunit, possibly for assembly of the head region. Essential for efficient processing of 16S rRNA. May be needed both before and after RbfA during the maturation of 16S rRNA. It has affinity for free ribosomal 30S subunits but not for 70S ribosomes. In Marinobacter nauticus (strain ATCC 700491 / DSM 11845 / VT8) (Marinobacter aquaeolei), this protein is Ribosome maturation factor RimM.